We begin with the raw amino-acid sequence, 128 residues long: Ribonuclease P protein component (128 aa).

It belongs to the RnpA family. Consists of a catalytic RNA component (M1 or rnpB) and a protein subunit.

It catalyses the reaction Endonucleolytic cleavage of RNA, removing 5'-extranucleotides from tRNA precursor.. Functionally, RNaseP catalyzes the removal of the 5'-leader sequence from pre-tRNA to produce the mature 5'-terminus. It can also cleave other RNA substrates such as 4.5S RNA. The protein component plays an auxiliary but essential role in vivo by binding to the 5'-leader sequence and broadening the substrate specificity of the ribozyme. In Parasynechococcus marenigrum (strain WH8102), this protein is Ribonuclease P protein component.